Reading from the N-terminus, the 154-residue chain is Large ribosomal subunit protein uL30 (154 aa).

The interval 114 to 139 is disordered; that stretch reads PVLRLHPPRGGHRGQKHPTAEGGQIG. The segment covering 119–129 has biased composition (basic residues); sequence HPPRGGHRGQK.

The protein belongs to the universal ribosomal protein uL30 family. Part of the 50S ribosomal subunit.

In Haloquadratum walsbyi (strain DSM 16790 / HBSQ001), this protein is Large ribosomal subunit protein uL30.